The chain runs to 1113 residues: uncharacterized protein (1113 aa).

An ATP-binding site is contributed by 313–320; it reads GPPGTGKS.

This sequence belongs to the DNA2/NAM7 helicase family.

This is an uncharacterized protein from Mycoplasma genitalium (strain ATCC 33530 / DSM 19775 / NCTC 10195 / G37) (Mycoplasmoides genitalium).